A 343-amino-acid polypeptide reads, in one-letter code: Dihydroorotase (343 aa).

2 residues coordinate Zn(2+): H13 and H15. Substrate is bound by residues 15-17 and N41; that span reads HLR. Zn(2+) is bound by residues K99, H136, and H174. Position 99 is an N6-carboxylysine (K99). H136 is a binding site for substrate. L219 contacts substrate. A Zn(2+)-binding site is contributed by D247. The active site involves D247. Substrate is bound by residues H251 and A263.

This sequence belongs to the metallo-dependent hydrolases superfamily. DHOase family. Class II DHOase subfamily. As to quaternary structure, homodimer. The cofactor is Zn(2+).

It carries out the reaction (S)-dihydroorotate + H2O = N-carbamoyl-L-aspartate + H(+). Its pathway is pyrimidine metabolism; UMP biosynthesis via de novo pathway; (S)-dihydroorotate from bicarbonate: step 3/3. In terms of biological role, catalyzes the reversible cyclization of carbamoyl aspartate to dihydroorotate. This Shewanella sp. (strain ANA-3) protein is Dihydroorotase.